The sequence spans 332 residues: Galactinol synthase 7 (332 aa).

Lys-101 is a catalytic residue. Asp-117, Asp-119, and His-255 together coordinate Mn(2+).

Belongs to the glycosyltransferase 8 family. Galactosyltransferase subfamily. The cofactor is a divalent metal cation.

Its subcellular location is the cytoplasm. It carries out the reaction myo-inositol + UDP-alpha-D-galactose = alpha-D-galactosyl-(1-&gt;3)-1D-myo-inositol + UDP + H(+). Galactinol synthase involved in the biosynthesis of raffinose family oligosaccharides (RFOs) that function as osmoprotectants. May promote plant stress tolerance. This is Galactinol synthase 7 (GOLS7) from Arabidopsis thaliana (Mouse-ear cress).